A 682-amino-acid polypeptide reads, in one-letter code: Elongation factor G (682 aa).

Residues Q8–V282 enclose the tr-type G domain. GTP contacts are provided by residues A17–T24, D81–H85, and N135–D138.

This sequence belongs to the TRAFAC class translation factor GTPase superfamily. Classic translation factor GTPase family. EF-G/EF-2 subfamily.

The protein localises to the cytoplasm. Functionally, catalyzes the GTP-dependent ribosomal translocation step during translation elongation. During this step, the ribosome changes from the pre-translocational (PRE) to the post-translocational (POST) state as the newly formed A-site-bound peptidyl-tRNA and P-site-bound deacylated tRNA move to the P and E sites, respectively. Catalyzes the coordinated movement of the two tRNA molecules, the mRNA and conformational changes in the ribosome. The protein is Elongation factor G of Malacoplasma penetrans (strain HF-2) (Mycoplasma penetrans).